We begin with the raw amino-acid sequence, 409 residues long: Histidinol dehydrogenase homolog (409 aa).

It belongs to the histidinol dehydrogenase family.

The sequence is that of Histidinol dehydrogenase homolog from Synechocystis sp. (strain ATCC 27184 / PCC 6803 / Kazusa).